A 104-amino-acid polypeptide reads, in one-letter code: uncharacterized protein (104 aa).

2 helical membrane-spanning segments follow: residues 53–73 (IWGI…NWDF) and 74–94 (ILNL…LILI).

It localises to the cell membrane. This is an uncharacterized protein from Methanocaldococcus jannaschii (strain ATCC 43067 / DSM 2661 / JAL-1 / JCM 10045 / NBRC 100440) (Methanococcus jannaschii).